Consider the following 994-residue polypeptide: Regulator of telomere elongation helicase 1 homolog (994 aa).

The Helicase ATP-binding domain occupies 15–300 (PKLSVKFPFE…EETARSEADA (286 aa)). ATP is bound at residue 50–57 (SPTGTGKT). Residues cysteine 142, cysteine 160, cysteine 169, and cysteine 208 each contribute to the [4Fe-4S] cluster site. Positions 251–254 (DEAH) match the DEAH box motif. Residues 876–895 (FKIETPGPSTSTLTQKSEPP) form a disordered region. The segment covering 882-892 (GPSTSTLTQKS) has biased composition (polar residues).

This sequence belongs to the helicase family. RAD3/XPD subfamily.

The protein resides in the nucleus. It carries out the reaction ATP + H2O = ADP + phosphate + H(+). Its function is as follows. A probable ATP-dependent DNA helicase implicated in DNA repair and the maintenance of genomic stability. Acts as an anti-recombinase to counteract toxic recombination and limit crossover during meiosis. Regulates meiotic recombination and crossover homeostasis by physically dissociating strand invasion events and thereby promotes noncrossover repair by meiotic synthesis dependent strand annealing (SDSA) as well as disassembly of D loop recombination intermediates. This is Regulator of telomere elongation helicase 1 homolog from Caenorhabditis elegans.